Here is a 323-residue protein sequence, read N- to C-terminus: Cyclin-H (323 aa).

Positions 296 to 323 (GYEDDGYISKKPKTEEDEWTDEDFGDSL) are disordered. Acidic residues predominate over residues 310-323 (EEDEWTDEDFGDSL).

The protein belongs to the cyclin family. Cyclin C subfamily. In terms of assembly, associates primarily with CDK7 and MAT1 to form the CAK complex. CAK can further associate with the core-TFIIH to form the TFIIH basal transcription factor.

The protein localises to the nucleus. In terms of biological role, regulates CDK7, the catalytic subunit of the CDK-activating kinase (CAK) enzymatic complex. CAK activates the cyclin-associated kinases CDK1, CDK2, CDK4 and CDK6 by threonine phosphorylation. CAK complexed to the core-TFIIH basal transcription factor activates RNA polymerase II by serine phosphorylation of the repetitive C-terminal domain (CTD) of its large subunit (POLR2A), allowing its escape from the promoter and elongation of the transcripts. Involved in cell cycle control and in RNA transcription by RNA polymerase II. Its expression and activity are constant throughout the cell cycle. The protein is Cyclin-H (ccnh) of Xenopus laevis (African clawed frog).